A 348-amino-acid polypeptide reads, in one-letter code: Protein RecA (348 aa).

67-74 (GPESSGKT) contacts ATP.

The protein belongs to the RecA family.

Its subcellular location is the cytoplasm. Its function is as follows. Can catalyze the hydrolysis of ATP in the presence of single-stranded DNA, the ATP-dependent uptake of single-stranded DNA by duplex DNA, and the ATP-dependent hybridization of homologous single-stranded DNAs. It interacts with LexA causing its activation and leading to its autocatalytic cleavage. This Salinispora arenicola (strain CNS-205) protein is Protein RecA.